The following is a 224-amino-acid chain: Ribose-5-phosphate isomerase A (224 aa).

Residues 26–29, 82–85, and 95–98 contribute to the substrate site; these read TGST, DGAD, and KGGG. Residue Glu-104 is the Proton acceptor of the active site. Lys-122 provides a ligand contact to substrate.

This sequence belongs to the ribose 5-phosphate isomerase family. In terms of assembly, homodimer.

It carries out the reaction aldehydo-D-ribose 5-phosphate = D-ribulose 5-phosphate. The protein operates within carbohydrate degradation; pentose phosphate pathway; D-ribose 5-phosphate from D-ribulose 5-phosphate (non-oxidative stage): step 1/1. Functionally, catalyzes the reversible conversion of ribose-5-phosphate to ribulose 5-phosphate. The protein is Ribose-5-phosphate isomerase A of Lactococcus lactis subsp. cremoris (strain MG1363).